A 128-amino-acid chain; its full sequence is Glycine cleavage system H protein (128 aa).

One can recognise a Lipoyl-binding domain in the interval 24–106 (VFCVGITDHA…YDEGWLFRIR (83 aa)). N6-lipoyllysine is present on Lys-65.

It belongs to the GcvH family. The glycine cleavage system is composed of four proteins: P, T, L and H. (R)-lipoate is required as a cofactor.

Its function is as follows. The glycine cleavage system catalyzes the degradation of glycine. The H protein shuttles the methylamine group of glycine from the P protein to the T protein. The chain is Glycine cleavage system H protein from Edwardsiella ictaluri (strain 93-146).